The primary structure comprises 842 residues: Probable receptor-like protein kinase At5g61350 (842 aa).

The first 27 residues, 1-27 (MGGDFRHFSSHVSLLLLFLLIVKSSSS), serve as a signal peptide directing secretion. Topologically, residues 28 to 425 (FTPADNYLID…IGGMSSKKLA (398 aa)) are extracellular. 6 N-linked (GlcNAc...) asparagine glycosylation sites follow: asparagine 81, asparagine 125, asparagine 252, asparagine 294, asparagine 359, and asparagine 365. Residues 426 to 446 (IAGIGFVMALTAFLGVVVLLV) form a helical membrane-spanning segment. The Cytoplasmic segment spans residues 447 to 842 (RWQRRPKDWQ…EMQSPSHSIP (396 aa)). Residues 525–803 (FDENAVCGVG…GDVLWNLEYA (279 aa)) enclose the Protein kinase domain. ATP contacts are provided by residues 531–539 (CGVGGFGKV) and lysine 553. The active-site Proton acceptor is the aspartate 655.

Belongs to the protein kinase superfamily. Ser/Thr protein kinase family.

It is found in the membrane. The polypeptide is Probable receptor-like protein kinase At5g61350 (Arabidopsis thaliana (Mouse-ear cress)).